Here is a 173-residue protein sequence, read N- to C-terminus: Ribosome maturation factor RimP (173 aa).

It belongs to the RimP family.

The protein resides in the cytoplasm. Required for maturation of 30S ribosomal subunits. This Pelodictyon phaeoclathratiforme (strain DSM 5477 / BU-1) protein is Ribosome maturation factor RimP.